Consider the following 359-residue polypeptide: DNA polymerase IV (359 aa).

One can recognise a UmuC domain in the interval 4–184 (IVHVDMDAFY…LKVNRIPGVG (181 aa)). Positions 8 and 102 each coordinate Mg(2+). Residue Glu103 is part of the active site.

The protein belongs to the DNA polymerase type-Y family. As to quaternary structure, monomer. The cofactor is Mg(2+).

The protein localises to the cytoplasm. It catalyses the reaction DNA(n) + a 2'-deoxyribonucleoside 5'-triphosphate = DNA(n+1) + diphosphate. In terms of biological role, poorly processive, error-prone DNA polymerase involved in untargeted mutagenesis. Copies undamaged DNA at stalled replication forks, which arise in vivo from mismatched or misaligned primer ends. These misaligned primers can be extended by PolIV. Exhibits no 3'-5' exonuclease (proofreading) activity. May be involved in translesional synthesis, in conjunction with the beta clamp from PolIII. The chain is DNA polymerase IV from Xanthomonas axonopodis pv. citri (strain 306).